Reading from the N-terminus, the 155-residue chain is 3-hydroxyacyl-[acyl-carrier-protein] dehydratase FabZ (155 aa).

The active site involves H59.

The protein belongs to the thioester dehydratase family. FabZ subfamily.

It is found in the cytoplasm. It catalyses the reaction a (3R)-hydroxyacyl-[ACP] = a (2E)-enoyl-[ACP] + H2O. Functionally, involved in unsaturated fatty acids biosynthesis. Catalyzes the dehydration of short chain beta-hydroxyacyl-ACPs and long chain saturated and unsaturated beta-hydroxyacyl-ACPs. In Bartonella henselae (strain ATCC 49882 / DSM 28221 / CCUG 30454 / Houston 1) (Rochalimaea henselae), this protein is 3-hydroxyacyl-[acyl-carrier-protein] dehydratase FabZ.